A 264-amino-acid polypeptide reads, in one-letter code: Transcription initiation factor TFIID subunit 9 (264 aa).

Residue Lys5 is modified to N6-acetyllysine. Phosphoserine is present on residues Ser149, Ser152, Ser155, and Ser158. The segment at Val150 to Thr174 is disordered. The segment covering Gly151–Thr174 has biased composition (polar residues). Phosphothreonine occurs at positions 159, 161, 164, and 178. Phosphoserine occurs at positions 181 and 196. The segment at Gln233–Leu264 is disordered. A compositionally biased stretch (acidic residues) spans Glu249–Leu264.

Belongs to the TAF9 family. In terms of assembly, component of the TFIID basal transcription factor complex, composed of TATA-box-binding protein TBP, and a number of TBP-associated factors (TAFs), including TAF1, TAF2, TAF3, TAF4, TAF5, TAF6, TAF7, TAF8, TAF9, TAF10, TAF11, TAF12 and TAF13. Component of the TATA-binding protein-free TAF complex (TFTC), the PCAF histone acetylase complex and the STAGA transcription coactivator-HAT complex. The PCAF complex consists at least of TADA2L/ADA2, SUPT3H/SPT3, TADA3L/ADA3, TAF5L/PAF65-beta, TAF6L/PAF65-alpha, TAF10/TAFII30, TAF12/TAFII20, TAF9/TAFII31 and TRRAP. The STAGA transcription coactivator-HAT complex consists at least of SUPT3H, GCN5L2, SUPT7L, TAF5L, TAF6L, TADA3L, TAD1L, TAF10, TAF12, TRRAP and TAF9. Binds N-terminal domain of p53/TP53 which is essential for transcription. Component of some MLL1/MLL complex, at least composed of the core components KMT2A/MLL1, ASH2L, HCFC1/HCF1, WDR5 and RBBP5, as well as the facultative components BACC1, CHD8, E2F6, HSP70, INO80C, KANSL1, LAS1L, MAX, MCRS1, MGA, MYST1/MOF, PELP1, PHF20, PRP31, RING2, RUVB1/TIP49A, RUVB2/TIP49B, SENP3, TAF1, TAF4, TAF6, TAF7, TAF9 and TEX10. Binds TFIIB and the Herpes simplex virus activator VP16. Forms a heterodimer with TAF6 in a complex with the TAF4B-TAF12 heterodimer. Also interacts with TAF5. Binds directly DNA. Increased DNA binding when complexed with TAF6.

The protein localises to the nucleus. In terms of biological role, the TFIID basal transcription factor complex plays a major role in the initiation of RNA polymerase II (Pol II)-dependent transcription. TFIID recognizes and binds promoters with or without a TATA box via its subunit TBP, a TATA-box-binding protein, and promotes assembly of the pre-initiation complex (PIC). The TFIID complex consists of TBP and TBP-associated factors (TAFs), including TAF1, TAF2, TAF3, TAF4, TAF5, TAF6, TAF7, TAF8, TAF9, TAF10, TAF11, TAF12 and TAF13. TAF9 is also a component of the TBP-free TAFII complex (TFTC), the PCAF histone acetylase complex and the STAGA transcription coactivator-HAT complex. TAF9 and its paralog TAF9B are involved in transcriptional activation as well as repression of distinct but overlapping sets of genes. Essential for cell viability. May have a role in gene regulation associated with apoptosis. The protein is Transcription initiation factor TFIID subunit 9 of Rattus norvegicus (Rat).